The primary structure comprises 76 residues: MQLALAAKYIGASMATLGLGGAAIGIALVFVALINGTSRNPSLRATLFPQAILGFALAEACGLFCLMMSFLLLYAV.

2 helical membrane-spanning segments follow: residues 14-34 and 52-72; these read MATL…VALI and ILGF…SFLL.

The protein belongs to the ATPase C chain family. F-type ATPases have 2 components, CF(1) - the catalytic core - and CF(0) - the membrane proton channel. CF(1) has five subunits: alpha(3), beta(3), gamma(1), delta(1), epsilon(1). CF(0) has three main subunits: a, b and c.

The protein resides in the mitochondrion membrane. Its function is as follows. Mitochondrial membrane ATP synthase (F(1)F(0) ATP synthase or Complex V) produces ATP from ADP in the presence of a proton gradient across the membrane which is generated by electron transport complexes of the respiratory chain. F-type ATPases consist of two structural domains, F(1) - containing the extramembraneous catalytic core and F(0) - containing the membrane proton channel, linked together by a central stalk and a peripheral stalk. During catalysis, ATP synthesis in the catalytic domain of F(1) is coupled via a rotary mechanism of the central stalk subunits to proton translocation. Part of the complex F(0) domain. A homomeric c-ring of probably 10 subunits is part of the complex rotary element. The chain is ATP synthase subunit 9, mitochondrial (ATP9) from Debaryomyces hansenii (strain ATCC 36239 / CBS 767 / BCRC 21394 / JCM 1990 / NBRC 0083 / IGC 2968) (Yeast).